The chain runs to 370 residues: MLLGYCGSGYYGMQYNPPHKTIEGEILTKLFDVGAISEENSLAPKKNSFMAAARTDKGVHAMLNLLSLKITLREDTVAKLNAALPPEIRVWGIQPVNKKFNARSACDSRWYQYLIPEFILIGPPRSSLLHRNVGGCYREDGSQEVWDTFLEQTRGRFSGDELCRLQDTAQKLSESDPLVQDYVGLLSGTLSGYCLSPSKLDAFEAAMQEYVGTHNFHNFTTGKLWGDPSAQRHIKKVVVSQASPGWICVRIHGQSFMLHQIRRMVALAVLAARCQLPPNIVRNYFNAGPRKYIPRAPAQGLLLEGPVFDGYNTKLRNLLYCEIRPDDITLERMCRFRERQICTAIAHEETQRHVFCHFVRQMNRLATPLI.

Residue aspartate 56 is the Nucleophile of the active site. A substrate-binding site is contributed by tyrosine 111.

The protein belongs to the tRNA pseudouridine synthase TruA family.

Its subcellular location is the mitochondrion. The catalysed reaction is uridine(27/28) in mitochondrial tRNA = pseudouridine(27/28) in mitochondrial tRNA. In terms of biological role, mitochondrial-specific pseudouridine synthase catalyzing the formation of pseudouridine at positions 27 and 28 in the anticodon stem and loop of mitochondrial transfer RNAs. This Saccharomyces cerevisiae (strain ATCC 204508 / S288c) (Baker's yeast) protein is tRNA pseudouridine(27/28) synthase (PUS2).